The chain runs to 331 residues: DNA-directed RNA polymerase subunit alpha (331 aa).

The tract at residues 1-233 (MVREKVTVST…DLFIPFLHAE (233 aa)) is alpha N-terminal domain (alpha-NTD). The segment at 265–331 (KEIELKYIFI…GILEKHFTID (67 aa)) is alpha C-terminal domain (alpha-CTD).

It belongs to the RNA polymerase alpha chain family. In terms of assembly, in plastids the minimal PEP RNA polymerase catalytic core is composed of four subunits: alpha, beta, beta', and beta''. When a (nuclear-encoded) sigma factor is associated with the core the holoenzyme is formed, which can initiate transcription.

The protein localises to the plastid. Its subcellular location is the chloroplast. The enzyme catalyses RNA(n) + a ribonucleoside 5'-triphosphate = RNA(n+1) + diphosphate. In terms of biological role, DNA-dependent RNA polymerase catalyzes the transcription of DNA into RNA using the four ribonucleoside triphosphates as substrates. This Vitis vinifera (Grape) protein is DNA-directed RNA polymerase subunit alpha.